The chain runs to 402 residues: Olfactomedin-like protein 1 (402 aa).

The N-terminal stretch at methionine 1–aspartate 28 is a signal peptide. Asparagine 66 carries an N-linked (GlcNAc...) asparagine glycan. The stretch at serine 79–isoleucine 133 forms a coiled coil. N-linked (GlcNAc...) asparagine glycosylation is found at asparagine 138 and asparagine 183. The region spanning serine 140–arginine 397 is the Olfactomedin-like domain. Cysteine 141 and cysteine 324 form a disulfide bridge.

Highly N-glycosylated. Mainly expressed in the small intestine, liver, lung and heart.

The protein resides in the secreted. In Homo sapiens (Human), this protein is Olfactomedin-like protein 1 (OLFML1).